The following is a 538-amino-acid chain: Chaperonin GroEL (538 aa).

Residues 29 to 32, 86 to 90, G413, 476 to 478, and D492 contribute to the ATP site; these read TIGP, DGTTT, and NAA.

It belongs to the chaperonin (HSP60) family. Forms a cylinder of 14 subunits composed of two heptameric rings stacked back-to-back. Interacts with the co-chaperonin GroES.

Its subcellular location is the cytoplasm. It carries out the reaction ATP + H2O + a folded polypeptide = ADP + phosphate + an unfolded polypeptide.. Functionally, together with its co-chaperonin GroES, plays an essential role in assisting protein folding. The GroEL-GroES system forms a nano-cage that allows encapsulation of the non-native substrate proteins and provides a physical environment optimized to promote and accelerate protein folding. The protein is Chaperonin GroEL of Staphylococcus aureus (strain MRSA252).